The sequence spans 398 residues: tRNA-specific 2-thiouridylase MnmA (398 aa).

Residues 20 to 27 (AMSGGVDS) and Leu46 each bind ATP. Cys114 acts as the Nucleophile in catalysis. Cys114 and Cys210 are disulfide-bonded. Residue Gly138 participates in ATP binding. Residues 160 to 162 (RDQ) are interaction with tRNA. The active-site Cysteine persulfide intermediate is Cys210.

The protein belongs to the MnmA/TRMU family.

Its subcellular location is the cytoplasm. It carries out the reaction S-sulfanyl-L-cysteinyl-[protein] + uridine(34) in tRNA + AH2 + ATP = 2-thiouridine(34) in tRNA + L-cysteinyl-[protein] + A + AMP + diphosphate + H(+). Catalyzes the 2-thiolation of uridine at the wobble position (U34) of tRNA, leading to the formation of s(2)U34. In Brucella suis (strain ATCC 23445 / NCTC 10510), this protein is tRNA-specific 2-thiouridylase MnmA.